Reading from the N-terminus, the 226-residue chain is Endonuclease V (226 aa).

Mg(2+) contacts are provided by Asp-43 and Asp-109.

This sequence belongs to the endonuclease V family. Requires Mg(2+) as cofactor.

The protein resides in the cytoplasm. The enzyme catalyses Endonucleolytic cleavage at apurinic or apyrimidinic sites to products with a 5'-phosphate.. Its function is as follows. DNA repair enzyme involved in the repair of deaminated bases. Selectively cleaves double-stranded DNA at the second phosphodiester bond 3' to a deoxyinosine leaving behind the intact lesion on the nicked DNA. The chain is Endonuclease V from Kosmotoga olearia (strain ATCC BAA-1733 / DSM 21960 / TBF 19.5.1).